We begin with the raw amino-acid sequence, 340 residues long: Probable ribonucleoside hydrolase (340 aa).

Aspartate 14 serves as a coordination point for Ca(2+). A substrate-binding site is contributed by aspartate 18. Aspartate 19 and threonine 139 together coordinate Ca(2+). Substrate contacts are provided by asparagine 172, glutamate 178, and asparagine 180. The Proton donor role is filled by histidine 259. Aspartate 260 provides a ligand contact to Ca(2+).

It belongs to the IUNH family. Requires Ca(2+) as cofactor.

The enzyme catalyses a purine D-ribonucleoside + H2O = a purine nucleobase + D-ribose. It catalyses the reaction a pyrimidine ribonucleoside + H2O = a pyrimidine nucleobase + D-ribose. Its pathway is purine metabolism; purine nucleoside salvage. In terms of biological role, catalyzes the hydrolysis of the N-glycosidic bond of purine and/or pyrimidine nucleosides into ribose and the base. The protein is Probable ribonucleoside hydrolase (iunH) of Dictyostelium discoideum (Social amoeba).